The primary structure comprises 400 residues: 2'-5'-oligoadenylate synthase 1 (400 aa).

Residues 13-60 (DKFIEDYLLPDTCFRMQINHAIDIICGFLKERCFRGSSYPVCVSKVVK) form an interaction with dsRNA region. Residue Ser-63 coordinates ATP. The Mg(2+) site is built by Asp-75, Asp-77, and Asp-148. An interaction with dsRNA region spans residues 200–210 (QRPTKLKSLIR). Arg-210, Lys-213, and Gln-229 together coordinate ATP. A lipid anchor (S-geranylgeranyl cysteine) is attached at Cys-397.

The protein belongs to the 2-5A synthase family. In terms of assembly, monomer. Homotetramer. Mg(2+) is required as a cofactor. Post-translationally, prenylated at C-terminal. C-terminal prenylation is necessary to initiate a block to SARS-CoV-2 and is associated with protection from severe COVID-1. The prenylated form is targeted to perinuclear structures rich in viral dsRNA, whereas the non-prenylated form is diffusely localized and unable to initiate a detectable block to SARS-CoV-2 replication. C-terminal prenylation is also necessary to initiate a block to cardiovirus EMCV. Not prenylated at C-terminal. The non-prenylated form is diffusely localized and unable to initiate a detectable block to SARS-CoV-2 replication. Expressed in lungs.

Its subcellular location is the cytoplasm. The protein localises to the mitochondrion. It localises to the nucleus. The protein resides in the microsome. It is found in the endoplasmic reticulum. Its subcellular location is the secreted. It carries out the reaction 3 ATP = 5'-triphosphoadenylyl-(2'-&gt;5')-adenylyl-(2'-&gt;5')-adenosine + 2 diphosphate. Produced as a latent enzyme which is activated by dsRNA generated during the course of viral infection. The dsRNA activator must be at least 15 nucleotides long, and no modification of the 2'-hydroxyl group is tolerated. ssRNA or dsDNA do not act as activators. Its function is as follows. Interferon-induced, dsRNA-activated antiviral enzyme which plays a critical role in cellular innate antiviral response. In addition, it may also play a role in other cellular processes such as apoptosis, cell growth, differentiation and gene regulation. Synthesizes higher oligomers of 2'-5'-oligoadenylates (2-5A) from ATP which then bind to the inactive monomeric form of ribonuclease L (RNase L) leading to its dimerization and subsequent activation. Activation of RNase L leads to degradation of cellular as well as viral RNA, resulting in the inhibition of protein synthesis, thus terminating viral replication. Can mediate the antiviral effect via the classical RNase L-dependent pathway or an alternative antiviral pathway independent of RNase L. The secreted form displays antiviral effect against vesicular stomatitis virus (VSV), herpes simplex virus type 2 (HSV-2), and encephalomyocarditis virus (EMCV) and stimulates the alternative antiviral pathway independent of RNase L. In terms of biological role, when prenylated at C-terminal, acts as a double-stranded RNA (dsRNA) sensor specifically targeted to membranous replicative organelles in SARS coronavirus-2/SARS-CoV-2 infected cells where it binds to dsRNA structures in the SARS-CoV-2 5'-UTR and initiates a potent block to SARS-CoV-2 replication. Recognizes short stretches of dsRNA and activates RNase L. The binding is remarkably specific, with two conserved stem loops in the SARS-CoV-2 5'- untranslated region (UTR) constituting the principal viral target. The same mechanism is necessary to initiate a block to cardiovirus EMCV. Not prenylated at C-terminal, is diffusely localized and unable to initiate a detectable block to SARS-CoV-2 replication. This Homo sapiens (Human) protein is 2'-5'-oligoadenylate synthase 1 (OAS1).